We begin with the raw amino-acid sequence, 209 residues long: Histidine biosynthesis bifunctional protein HisIE (209 aa).

Residues 1 to 116 (MKQADELRFN…EEQAADRFGI (116 aa)) form a phosphoribosyl-AMP cyclohydrolase region. A phosphoribosyl-ATP pyrophosphohydrolase region spans residues 117–209 (MNELERVIAE…LKKRHSEIEE (93 aa)).

This sequence in the N-terminal section; belongs to the PRA-CH family. It in the C-terminal section; belongs to the PRA-PH family.

It localises to the cytoplasm. The catalysed reaction is 1-(5-phospho-beta-D-ribosyl)-ATP + H2O = 1-(5-phospho-beta-D-ribosyl)-5'-AMP + diphosphate + H(+). It catalyses the reaction 1-(5-phospho-beta-D-ribosyl)-5'-AMP + H2O = 1-(5-phospho-beta-D-ribosyl)-5-[(5-phospho-beta-D-ribosylamino)methylideneamino]imidazole-4-carboxamide. It functions in the pathway amino-acid biosynthesis; L-histidine biosynthesis; L-histidine from 5-phospho-alpha-D-ribose 1-diphosphate: step 2/9. It participates in amino-acid biosynthesis; L-histidine biosynthesis; L-histidine from 5-phospho-alpha-D-ribose 1-diphosphate: step 3/9. The protein is Histidine biosynthesis bifunctional protein HisIE (hisI) of Bacillus subtilis (strain 168).